A 625-amino-acid polypeptide reads, in one-letter code: Dual specificity protein phosphatase 8 (625 aa).

The Rhodanese domain maps to 23 to 138; sequence GPGGPLVIDS…FSSCFPGLCE (116 aa). In terms of domain architecture, Tyrosine-protein phosphatase spans 160–302; sequence GLTRILPHLY…LLEYERSLKL (143 aa). Catalysis depends on Cys246, which acts as the Phosphocysteine intermediate. The tract at residues 306–586 is disordered; the sequence is LQGDPGTPSG…PAPETQFKRR (281 aa). A compositionally biased stretch (basic and acidic residues) spans 380 to 389; that stretch reads SSDRLQDTNR. The span at 431-448 shows a compositional bias: low complexity; it reads AALGLSSPSPDSPDAAPE. Over residues 555-570 the composition is skewed to basic and acidic residues; that stretch reads DLRRREAARAEPRDAR.

It belongs to the protein-tyrosine phosphatase family. Non-receptor class dual specificity subfamily. In terms of assembly, monomer. In terms of tissue distribution, abundant in brain, heart and skeletal muscle.

It is found in the cytoplasm. The protein resides in the nucleus. The enzyme catalyses O-phospho-L-tyrosyl-[protein] + H2O = L-tyrosyl-[protein] + phosphate. It catalyses the reaction O-phospho-L-seryl-[protein] + H2O = L-seryl-[protein] + phosphate. The catalysed reaction is O-phospho-L-threonyl-[protein] + H2O = L-threonyl-[protein] + phosphate. In terms of biological role, has phosphatase activity with synthetic phosphatase substrates and negatively regulates mitogen-activated protein kinase activity, presumably by catalysing their dephosphorylation. Expected to display protein phosphatase activity toward phosphotyrosine, phosphoserine and phosphothreonine residues. The polypeptide is Dual specificity protein phosphatase 8 (DUSP8) (Homo sapiens (Human)).